The sequence spans 128 residues: Small ribosomal subunit protein uS12 (128 aa).

Aspartate 89 bears the 3-methylthioaspartic acid mark. The segment at 101-128 (SLDTSGVADRRNGRSKYGAKRPKEGAKK) is disordered.

It belongs to the universal ribosomal protein uS12 family. Part of the 30S ribosomal subunit. Contacts proteins S8 and S17. May interact with IF1 in the 30S initiation complex.

With S4 and S5 plays an important role in translational accuracy. Functionally, interacts with and stabilizes bases of the 16S rRNA that are involved in tRNA selection in the A site and with the mRNA backbone. Located at the interface of the 30S and 50S subunits, it traverses the body of the 30S subunit contacting proteins on the other side and probably holding the rRNA structure together. The combined cluster of proteins S8, S12 and S17 appears to hold together the shoulder and platform of the 30S subunit. This is Small ribosomal subunit protein uS12 from Chloroherpeton thalassium (strain ATCC 35110 / GB-78).